The primary structure comprises 156 residues: Small ribosomal subunit protein uS7 (156 aa).

It belongs to the universal ribosomal protein uS7 family. In terms of assembly, part of the 30S ribosomal subunit. Contacts proteins S9 and S11.

Functionally, one of the primary rRNA binding proteins, it binds directly to 16S rRNA where it nucleates assembly of the head domain of the 30S subunit. Is located at the subunit interface close to the decoding center, probably blocks exit of the E-site tRNA. This is Small ribosomal subunit protein uS7 from Laribacter hongkongensis (strain HLHK9).